The following is a 148-amino-acid chain: Deoxyuridine 5'-triphosphate nucleotidohydrolase (148 aa).

Substrate is bound by residues Arg67–Gly69, Asn80, Leu84–Asp86, and Met94.

This sequence belongs to the dUTPase family. Mg(2+) serves as cofactor.

It carries out the reaction dUTP + H2O = dUMP + diphosphate + H(+). The protein operates within pyrimidine metabolism; dUMP biosynthesis; dUMP from dCTP (dUTP route): step 2/2. Functionally, this enzyme is involved in nucleotide metabolism: it produces dUMP, the immediate precursor of thymidine nucleotides and it decreases the intracellular concentration of dUTP so that uracil cannot be incorporated into DNA. The chain is Deoxyuridine 5'-triphosphate nucleotidohydrolase from Burkholderia thailandensis (strain ATCC 700388 / DSM 13276 / CCUG 48851 / CIP 106301 / E264).